The primary structure comprises 228 residues: L-ribulose-5-phosphate 4-epimerase UlaF (228 aa).

Substrate is bound by residues 26–27, 43–44, and 72–73; these read GN, SG, and SS. Zn(2+) is bound by residues aspartate 74, histidine 93, and histidine 95. Residue aspartate 118 is the Proton donor/acceptor of the active site. A Zn(2+)-binding site is contributed by histidine 167. Tyrosine 225 (proton donor/acceptor) is an active-site residue.

Belongs to the aldolase class II family. AraD/FucA subfamily. The cofactor is Zn(2+).

The enzyme catalyses L-ribulose 5-phosphate = D-xylulose 5-phosphate. The protein operates within cofactor degradation; L-ascorbate degradation; D-xylulose 5-phosphate from L-ascorbate: step 4/4. Its function is as follows. Catalyzes the isomerization of L-ribulose 5-phosphate to D-xylulose 5-phosphate. Is involved in the anaerobic L-ascorbate utilization. The polypeptide is L-ribulose-5-phosphate 4-epimerase UlaF (Escherichia coli (strain SMS-3-5 / SECEC)).